Consider the following 993-residue polypeptide: UPF0182 protein Sare_4110 (993 aa).

Transmembrane regions (helical) follow at residues 18–38, 61–81, 110–130, 171–191, 209–229, 260–280, and 283–303; these read IGVL…VQAW, LLLF…NLWL, LGTW…LSAQ, GVAF…HYVF, AHLS…YVLD, ILAY…NAWM, and LVWP…IGGI. 2 disordered regions span residues 892–937 and 974–993; these read QGEK…ADAA and EQAA…SPGG. Positions 900 to 929 are enriched in pro residues; sequence STPPPSGETPAPTPTPTPTPSSPSVTPPPV. Positions 976–993 are enriched in low complexity; the sequence is AAGPGSAATPTGSPSPGG.

The protein belongs to the UPF0182 family.

The protein resides in the cell membrane. The chain is UPF0182 protein Sare_4110 from Salinispora arenicola (strain CNS-205).